The chain runs to 151 residues: MTIKPSDSVSWFQVLQRGQHYMKTWPADKRLAPVFPENRVTVVTRFGIRFMPPLAIFTLTWQIALGGQLGPAIATALFACGLPLQGLWWLGKRAITPLPPTLLQWFHEVRHKLSEAGQAVAPIEPIPTYQSLADLLKRAFKQLDKTFLDDL.

The next 2 membrane-spanning stretches (helical) occupy residues 46 to 66 and 69 to 89; these read FGIR…IALG and LGPA…GLWW.

This sequence belongs to the UPF0208 family.

Its subcellular location is the cell inner membrane. The polypeptide is UPF0208 membrane protein YPTB2595 (Yersinia pseudotuberculosis serotype I (strain IP32953)).